We begin with the raw amino-acid sequence, 418 residues long: 3-isopropylmalate dehydratase large subunit 1 (418 aa).

[4Fe-4S] cluster contacts are provided by Cys-298, Cys-358, and Cys-361.

It belongs to the aconitase/IPM isomerase family. LeuC type 2 subfamily. In terms of assembly, heterodimer of LeuC and LeuD. It depends on [4Fe-4S] cluster as a cofactor.

The catalysed reaction is (2R,3S)-3-isopropylmalate = (2S)-2-isopropylmalate. It participates in amino-acid biosynthesis; L-leucine biosynthesis; L-leucine from 3-methyl-2-oxobutanoate: step 2/4. Functionally, catalyzes the isomerization between 2-isopropylmalate and 3-isopropylmalate, via the formation of 2-isopropylmaleate. This chain is 3-isopropylmalate dehydratase large subunit 1, found in Thermotoga maritima (strain ATCC 43589 / DSM 3109 / JCM 10099 / NBRC 100826 / MSB8).